Reading from the N-terminus, the 159-residue chain is 2-C-methyl-D-erythritol 2,4-cyclodiphosphate synthase (159 aa).

Positions 8 and 10 each coordinate a divalent metal cation. 4-CDP-2-C-methyl-D-erythritol 2-phosphate-binding positions include 8 to 10 and 34 to 35; these read DVH and HS. His-42 lines the a divalent metal cation pocket. 4-CDP-2-C-methyl-D-erythritol 2-phosphate-binding positions include 56-58, 61-65, 100-106, 132-135, Phe-139, and Arg-142; these read DIG, FPDTD, AQAPKML, and TTTE.

Belongs to the IspF family. As to quaternary structure, homotrimer. A divalent metal cation serves as cofactor.

The enzyme catalyses 4-CDP-2-C-methyl-D-erythritol 2-phosphate = 2-C-methyl-D-erythritol 2,4-cyclic diphosphate + CMP. The protein operates within isoprenoid biosynthesis; isopentenyl diphosphate biosynthesis via DXP pathway; isopentenyl diphosphate from 1-deoxy-D-xylulose 5-phosphate: step 4/6. Its function is as follows. Involved in the biosynthesis of isopentenyl diphosphate (IPP) and dimethylallyl diphosphate (DMAPP), two major building blocks of isoprenoid compounds. Catalyzes the conversion of 4-diphosphocytidyl-2-C-methyl-D-erythritol 2-phosphate (CDP-ME2P) to 2-C-methyl-D-erythritol 2,4-cyclodiphosphate (ME-CPP) with a corresponding release of cytidine 5-monophosphate (CMP). The protein is 2-C-methyl-D-erythritol 2,4-cyclodiphosphate synthase of Klebsiella pneumoniae subsp. pneumoniae (strain ATCC 700721 / MGH 78578).